A 735-amino-acid chain; its full sequence is Phosphoribosylformylglycinamidine synthase subunit PurL (735 aa).

His49 is an active-site residue. The ATP site is built by Tyr52 and Lys91. Residue Glu93 coordinates Mg(2+). Substrate contacts are provided by residues 94–97 and Arg116; that span reads SHNH. His95 (proton acceptor) is an active-site residue. Asp117 is a Mg(2+) binding site. A substrate-binding site is contributed by Gln240. Asp268 contributes to the Mg(2+) binding site. 312–314 contacts substrate; sequence ESQ. Residues Asp493 and Gly530 each contribute to the ATP site. Asn531 contacts Mg(2+). A substrate-binding site is contributed by Ser533.

Belongs to the FGAMS family. As to quaternary structure, monomer. Part of the FGAM synthase complex composed of 1 PurL, 1 PurQ and 2 PurS subunits.

Its subcellular location is the cytoplasm. The enzyme catalyses N(2)-formyl-N(1)-(5-phospho-beta-D-ribosyl)glycinamide + L-glutamine + ATP + H2O = 2-formamido-N(1)-(5-O-phospho-beta-D-ribosyl)acetamidine + L-glutamate + ADP + phosphate + H(+). The protein operates within purine metabolism; IMP biosynthesis via de novo pathway; 5-amino-1-(5-phospho-D-ribosyl)imidazole from N(2)-formyl-N(1)-(5-phospho-D-ribosyl)glycinamide: step 1/2. Its function is as follows. Part of the phosphoribosylformylglycinamidine synthase complex involved in the purines biosynthetic pathway. Catalyzes the ATP-dependent conversion of formylglycinamide ribonucleotide (FGAR) and glutamine to yield formylglycinamidine ribonucleotide (FGAM) and glutamate. The FGAM synthase complex is composed of three subunits. PurQ produces an ammonia molecule by converting glutamine to glutamate. PurL transfers the ammonia molecule to FGAR to form FGAM in an ATP-dependent manner. PurS interacts with PurQ and PurL and is thought to assist in the transfer of the ammonia molecule from PurQ to PurL. This is Phosphoribosylformylglycinamidine synthase subunit PurL from Methylocella silvestris (strain DSM 15510 / CIP 108128 / LMG 27833 / NCIMB 13906 / BL2).